Consider the following 106-residue polypeptide: MVNVPKTRKTYCKGKECRKHTQHKVTQYKAGKASLFAQGKRRYDRKQSGYGGQTKQIFHKKAKTTKKVVLRLECVVCKTKAQLPLKRCKHFELGGDKKQKGQALQF.

Residues Cys12, Cys17, Cys74, and Cys77 each coordinate Zn(2+).

The protein belongs to the eukaryotic ribosomal protein eL42 family. Component of the large ribosomal subunit. Mature ribosomes consist of a small (40S) and a large (60S) subunit. The 40S subunit contains about 32 different proteins and 1 molecule of RNA (18S). The 60S subunit contains 45 different proteins and 3 molecules of RNA (25S, 5.8S and 5S). The cofactor is Zn(2+).

It localises to the cytoplasm. Its function is as follows. Component of the ribosome, a large ribonucleoprotein complex responsible for the synthesis of proteins in the cell. The small ribosomal subunit (SSU) binds messenger RNAs (mRNAs) and translates the encoded message by selecting cognate aminoacyl-transfer RNA (tRNA) molecules. The large subunit (LSU) contains the ribosomal catalytic site termed the peptidyl transferase center (PTC), which catalyzes the formation of peptide bonds, thereby polymerizing the amino acids delivered by tRNAs into a polypeptide chain. The nascent polypeptides leave the ribosome through a tunnel in the LSU and interact with protein factors that function in enzymatic processing, targeting, and the membrane insertion of nascent chains at the exit of the ribosomal tunnel. This is Large ribosomal subunit protein eL42 (RPL44) from Candida albicans (strain SC5314 / ATCC MYA-2876) (Yeast).